The chain runs to 282 residues: Protoheme IX farnesyltransferase (282 aa).

9 helical membrane passes run 9-29 (LAKP…FLLA), 39-59 (LPLF…GCVF), 79-99 (LVTG…LLIL), 102-122 (LVLY…GFIV), 139-159 (VLGG…VVNI), 165-185 (LALF…IAML), 210-230 (IMLF…VLGS), 231-251 (ADLF…YKSI), and 261-281 (VFAK…CLTM).

The protein belongs to the UbiA prenyltransferase family. Protoheme IX farnesyltransferase subfamily.

The protein localises to the cell inner membrane. The enzyme catalyses heme b + (2E,6E)-farnesyl diphosphate + H2O = Fe(II)-heme o + diphosphate. It functions in the pathway porphyrin-containing compound metabolism; heme O biosynthesis; heme O from protoheme: step 1/1. Functionally, converts heme B (protoheme IX) to heme O by substitution of the vinyl group on carbon 2 of heme B porphyrin ring with a hydroxyethyl farnesyl side group. The polypeptide is Protoheme IX farnesyltransferase (Francisella tularensis subsp. holarctica (strain LVS)).